Reading from the N-terminus, the 354-residue chain is Probable RNA methyltransferase AZOSEA28700 (354 aa).

The Proton acceptor role is filled by E88. A Radical SAM core domain is found at 91-317 (LLPRDGLCVS…TKLRHSAGQD (227 aa)). Residues C98 and C322 are joined by a disulfide bond. Residues C105, C109, and C112 each contribute to the [4Fe-4S] cluster site. Residues 150 to 151 (GE), S180, 203 to 205 (SLH), and N279 each bind S-adenosyl-L-methionine. Catalysis depends on C322, which acts as the S-methylcysteine intermediate.

The protein belongs to the radical SAM superfamily. RlmN family. [4Fe-4S] cluster serves as cofactor.

It is found in the cytoplasm. The sequence is that of Probable RNA methyltransferase AZOSEA28700 from Aromatoleum aromaticum (strain DSM 19018 / LMG 30748 / EbN1) (Azoarcus sp. (strain EbN1)).